Here is a 1562-residue protein sequence, read N- to C-terminus: MAAGSGGSGGSGGGPGPGPGGGGGPSGSGSGPGSNGGLGSGGELHPRTGRLVSLSACGRTARRQQPGQEFNHGLVLSREPLRDGRVFTVRIDRKVNSWSGSIEIGVTALDPSVLDFPSSATGLKGGSWVVSGCSVLRDGRSVLEEYGQDLDQLGEGDRVGVERTVAGELRLWVNGRDCGVAATGLPPRVWAVVDLYGKCTQITVLPPEPGFSPPTPIPTPPLEPLAPTEDSALAEQGTSADEAFMVSPAQARPETFPNSLESHNDFANMELSEVVSNTILSAYNGGLLNVNLSSPPAGEGLGSSGAATSPILTSNDALLFHEKCGTLIKLSNNNKTAERRRPLDEFNNGVVMTNRPLRDNEMFEIRIDKLVDKWSGSIEIGVTTHNPNSLEYPATMTNLQSGTIMMSGCGILTNGKGTRREYCEFSLDELQEGDHIGLTRKSNSALHFFINGIDQGVATPLTPPVVYGVVDLYGMAVKVTIVHNNNHSDRLRRNNAILRALSPEGALRRAAPAAQAEPERLLFHPNCGQKAAITHEGRTALRPHATDDFNHGVVLSSRALRDGEVFQVRIDKMVDKWAGSIEIGVTTHNPAYLQLPSTMTNLRSGTWMMTGNGVMHNGTTILDEYGHNLDRLKAGDTVGVVRREDGTLHFFVNGMTQGPAAWNVPPGVYAVVDLYGQAAQATIVDDVEVAPVPEPLPEGNNQVSPSSPSSGAGGSDLRFHQLHGSNAVITNGGRTALRHNCRSEFNDAIVISNRALRDGELFEIVIQKMVDRWSGSIEAGVTAIRPEDLEFPNTMTDIDYDTWMLSGTAIMQDGNTMRNNYGCDLDALGTGARIGMMRTAKGDLHYFINGQDQGAACSGLPPGKEVYAVVDLYGQCVQVSITNATGPMDNSLATSNTATEKSFPLHSPVAGVAHRFHSTCGKNVTLEEDGTRAVRAAGYAHGLVFSTKELRAEEVFEVKVEELDEKWAGSLRLGLTTLAPGEMGPGAGGGGPGLPPSLPELRTKTTWMVSSCEVRRDGQLQRMNYGRNLERLGVGSRVGVRRGADDTMHILVDGEDMGPAATGIAKNVWAVLDLYGPVRGVSIVSSTRLEESEGTQPPSPSSDTGSEGEEDDEGEEHGLGGQNEVGIIPTTLEFLENHGKNILLSNGNRTATRVASYNQGIVVINQPLVPQLLVQVRIDFLNRQWTSSLVLGVITCAPERLNFPASACALKRAAWLLRGRGVFHNGLKICEKFGPNLDTCPEGTILGLRLDSSGGLHLHVNGVDQGVAVPDVPQPCHALVDLYGQCEQVTIVNPEPGAASGKSAGTQGDMEKADMVDGIKESVCWGPPPAASPLKSCEYHALCSRFQELLLLPEDYFMPPPKRSLCYCESCRKLRGDEAHRRRGEPPREYALPFGWCRFNLRVNPRLEAGTLTKKWHMAYHGSNVAAVRRVLDRGELGAGTASILSCRPLKGEPGVGFEEPGENCAPPREEQPPPVLLSPSLQYAGAETLASKVQFRDPKSQRTHQAQVAFQVCVRPGSYTPGPPSAALGEPPDPHFSPAELEWVTKEKGATLLCALLVRVE.

The segment covering 1–42 (MAAGSGGSGGSGGGPGPGPGGGGGPSGSGSGPGSNGGLGSGG) has biased composition (gly residues). 2 disordered regions span residues 1–48 (MAAG…HPRT) and 207–236 (PEPG…LAEQ). NHR domains follow at residues 41–207 (GGEL…VLPP) and 317–484 (ALLF…IVHN). Over residues 207–224 (PEPGFSPPTPIPTPPLEP) the composition is skewed to pro residues. The residue at position 502 (S502) is a Phosphoserine. NHR domains lie at 520–686 (RLLF…IVDD) and 716–884 (DLRF…ITNA). The segment at 691–716 (PVPEPLPEGNNQVSPSSPSSGAGGSD) is disordered. S907 carries the post-translational modification Phosphoserine. The NHR 5 domain occupies 913–1086 (AHRFHSTCGK…PVRGVSIVSS (174 aa)). The interval 1086 to 1123 (STRLEESEGTQPPSPSSDTGSEGEEDDEGEEHGLGGQN) is disordered. Residues 1106 to 1115 (SEGEEDDEGE) are compositionally biased toward acidic residues. The region spanning 1131-1294 (TLEFLENHGK…QCEQVTIVNP (164 aa)) is the NHR 6 domain.

As to quaternary structure, interacts with CCP110; this interaction propmotes CCP110 ubiquitination and degradation via the proteasome pathway. Via its interaction with CCP110, may indirectly interact with CEP97. Interacts with the E3 ubiquitin-protein ligase HERC2 and UBE3A. May interact with MAPK6 and hence mediate MAPK6 interaction with UBE3A. Interaction with UBE3A may be indirect and mediated by HERC2. Post-translationally, ubiquitinated; undergoes HERC2-dependent 'Lys-48' ubiquitination. This ubiquitination leads to proteasomal degradation. In terms of tissue distribution, widely expressed at high levels (including brain).

It localises to the cytoplasm. Its subcellular location is the cytoskeleton. The protein resides in the microtubule organizing center. The protein localises to the centrosome. It is found in the centriole. Its function is as follows. Promotes CCP110 ubiquitination and proteasome-dependent degradation. By counteracting accumulation of CP110, maintains normal centriolar homeostasis and preventing formation of ectopic microtubular organizing centers. The sequence is that of Neuralized-like protein 4 (NEURL4) from Homo sapiens (Human).